The chain runs to 229 residues: Ribonuclease 3 (229 aa).

One can recognise an RNase III domain in the interval tryptophan 4–glycine 133. Glutamate 46 is a Mg(2+) binding site. The active site involves aspartate 50. Positions 119 and 122 each coordinate Mg(2+). Residue glutamate 122 is part of the active site. The region spanning aspartate 159–histidine 228 is the DRBM domain.

It belongs to the ribonuclease III family. As to quaternary structure, homodimer. Mg(2+) serves as cofactor.

Its subcellular location is the cytoplasm. The catalysed reaction is Endonucleolytic cleavage to 5'-phosphomonoester.. Digests double-stranded RNA. Involved in the processing of primary rRNA transcript to yield the immediate precursors to the large and small rRNAs (23S and 16S). Processes some mRNAs, and tRNAs when they are encoded in the rRNA operon. Processes pre-crRNA and tracrRNA of type II CRISPR loci if present in the organism. The chain is Ribonuclease 3 from Listeria welshimeri serovar 6b (strain ATCC 35897 / DSM 20650 / CCUG 15529 / CIP 8149 / NCTC 11857 / SLCC 5334 / V8).